The chain runs to 331 residues: Fructose-1,6-bisphosphatase class 1 2 (331 aa).

Mg(2+)-binding residues include Glu91, Asp112, Leu114, and Asp115. Substrate contacts are provided by residues 115–118 (DGSS), Asn207, Tyr238, and Lys268. Glu274 is a binding site for Mg(2+).

Belongs to the FBPase class 1 family. As to quaternary structure, homotetramer. The cofactor is Mg(2+).

It localises to the cytoplasm. The catalysed reaction is beta-D-fructose 1,6-bisphosphate + H2O = beta-D-fructose 6-phosphate + phosphate. Its pathway is carbohydrate biosynthesis; Calvin cycle. The polypeptide is Fructose-1,6-bisphosphatase class 1 2 (Acaryochloris marina (strain MBIC 11017)).